The chain runs to 403 residues: tRNA methyltransferase 10 homolog C (403 aa).

The transit peptide at 1–39 (MAAFLKMSVSVNFFRPFTRFLVPFTLHRKRNNLTILQRY) directs the protein to the mitochondrion. The residue at position 84 (serine 84) is a Phosphoserine. Residues 138–169 (TKEKVKKARQIKKEMKAAAREEAKNIKLLETT) adopt a coiled-coil conformation. In terms of domain architecture, SAM-dependent MTase TRM10-type spans 191-383 (MGWKGAQAMQ…QFVPKRKHTG (193 aa)).

This sequence belongs to the class IV-like SAM-binding methyltransferase superfamily. TRM10 family. Component of mitochondrial ribonuclease P, a complex composed of TRMT10C/MRPP1, HSD17B10/MRPP2 and PRORP/MRPP3. Interacts with HSD17B10/MRPP2; forming the MRPP1-MRPP2 subcomplex of the mitochondrial ribonuclease P complex. Interacts with GRSF1.

The protein resides in the mitochondrion matrix. Its subcellular location is the mitochondrion nucleoid. It catalyses the reaction adenosine(9) in tRNA + S-adenosyl-L-methionine = N(1)-methyladenosine(9) in tRNA + S-adenosyl-L-homocysteine + H(+). The catalysed reaction is guanosine(9) in tRNA + S-adenosyl-L-methionine = N(1)-methylguanosine(9) in tRNA + S-adenosyl-L-homocysteine + H(+). The enzyme catalyses an adenosine in mRNA + S-adenosyl-L-methionine = an N(1)-methyladenosine in mRNA + S-adenosyl-L-homocysteine + H(+). Mitochondrial tRNA N(1)-methyltransferase involved in mitochondrial tRNA maturation. Component of mitochondrial ribonuclease P, a complex composed of TRMT10C/MRPP1, HSD17B10/MRPP2 and PRORP/MRPP3, which cleaves tRNA molecules in their 5'-ends. Together with HSD17B10/MRPP2, forms a subcomplex of the mitochondrial ribonuclease P, named MRPP1-MRPP2 subcomplex, which displays functions that are independent of the ribonuclease P activity. The MRPP1-MRPP2 subcomplex catalyzes the formation of N(1)-methylguanine and N(1)-methyladenine at position 9 (m1G9 and m1A9, respectively) in tRNAs; TRMT10C/MRPP1 acting as the catalytic N(1)-methyltransferase subunit. The MRPP1-MRPP2 subcomplex also acts as a tRNA maturation platform: following 5'-end cleavage by the mitochondrial ribonuclease P complex, the MRPP1-MRPP2 subcomplex enhances the efficiency of 3'-processing catalyzed by ELAC2, retains the tRNA product after ELAC2 processing and presents the nascent tRNA to the mitochondrial CCA tRNA nucleotidyltransferase TRNT1 enzyme. In addition to tRNA N(1)-methyltransferase activity, TRMT10C/MRPP1 also acts as a mRNA N(1)-methyltransferase by mediating methylation of adenosine residues at the N(1) position of MT-ND5 mRNA. Associates with mitochondrial DNA complexes at the nucleoids to initiate RNA processing and ribosome assembly. The sequence is that of tRNA methyltransferase 10 homolog C from Homo sapiens (Human).